A 310-amino-acid chain; its full sequence is Leucine carboxyl methyltransferase 1 (310 aa).

S-adenosyl-L-methionine contacts are provided by residues Arg-50, Gly-75, Asp-100, Asp-145–Ile-146, and Glu-169.

Belongs to the methyltransferase superfamily. LCMT family.

The catalysed reaction is [phosphatase 2A protein]-C-terminal L-leucine + S-adenosyl-L-methionine = [phosphatase 2A protein]-C-terminal L-leucine methyl ester + S-adenosyl-L-homocysteine. Its function is as follows. Methylates the carboxyl group of the C-terminal leucine residue of protein phosphatase 2A catalytic subunits to form alpha-leucine ester residues. In Schizosaccharomyces pombe (strain 972 / ATCC 24843) (Fission yeast), this protein is Leucine carboxyl methyltransferase 1 (ppm1).